Here is a 541-residue protein sequence, read N- to C-terminus: Protein VAPYRIN (541 aa).

Residues 4–138 (LIKLDPSNIV…IDSAIKVMFV (135 aa)) form the MSP domain. ANK repeat units lie at residues 176-205 (QGQTLLHLAISKTRPDLVQLILEFKPDIEA), 209-238 (VGSTPLEAASSSGESLIVELLLAHKANTEG), 242-271 (SVFRPIHHASREGHMEILRLLLLKGARVDS), 275-304 (DGNTSLHLAVEEKRRDCARLLLANGARTDV), 309-338 (EGDTPLHIAAANGDENMVKLLLHKGATKYV), 342-372 (LGKTAFDVAAENGHSRLFDALRLGDNLCAAA), 374-392 (KGEVRTIQKVLESGGVING), 396-425 (NGWTSLHRAAFKGRMDAVRFLVEKGIDLDA), 429-458 (DGYTALHCAAESGHADVTEFLVKKGADVEA), and 462-491 (KGVSALQIVESLNYVGITRILVNGGASREG).

In terms of assembly, interacts with EX70I at the periarbuscular membrane (PAM) around the arbuscule hyphal tips. In terms of tissue distribution, expressed in roots.

It is found in the cytoplasm. Its subcellular location is the nucleus. The protein localises to the cell membrane. Its function is as follows. Required for arbuscular mycorrhizal (AM) symbiosis with AM fungi (e.g. Glomus versiforme and Gigaspora gigantea) both during fungal passage across root epidermis and for arbuscule formation in cortical cells; this symbiosis promotes phosphorus (P) and copper (Cu) uptake. Essential for infection by symbiotic nitrogen-fixing rhizobial bacteria (e.g. Sinorhizobium meliloti) leading to the formation of root nodules. This chain is Protein VAPYRIN, found in Medicago truncatula (Barrel medic).